Here is a 220-residue protein sequence, read N- to C-terminus: Histone deacetylase complex subunit SAP30 (220 aa).

Positions 1-129 (MNGFTPDEMS…QSVRNRRKRK (129 aa)) are interaction with NCOR1. Position 5 is a phosphothreonine (Thr-5). An Atypical zinc finger spans residues 67–115 (CCLREDGERCGRAAGNASFSKRIQKSISQKKVKIELDKSARHLYICDYH). Lys-87 participates in a covalent cross-link: Glycyl lysine isopeptide (Lys-Gly) (interchain with G-Cter in SUMO2). The segment at 123–143 (RNRRKRKGSDDDGGDSPVQDI) is disordered. The segment at 130–220 (GSDDDGGDSP…SDLKVDSGVH (91 aa)) is interaction with SIN3A. Residues Ser-131 and Ser-138 each carry the phosphoserine modification. Thr-145 carries the post-translational modification Phosphothreonine. Residues Lys-194, Lys-205, and Lys-214 each participate in a glycyl lysine isopeptide (Lys-Gly) (interchain with G-Cter in SUMO2) cross-link.

It belongs to the SAP30 family. In terms of assembly, component of the histone deacetylase complex that includes at least SIN3A, HDAC1 and HDAC2. Found in a complex composed of at least SINHCAF, SIN3A, HDAC1, SAP30, RBBP4, OGT and TET1. Interacts with HDAC1. Interacts with SIN3A, SIN3B, HDAC2, RBBP4 and NCOR1. Interacts with SAMSN1. Interacts with HCFC1. Interacts with SAP30BP. Expressed in all tissues tested with highest levels in pancreas, ovary, PBL, spleen and thymus; lowest levels in brain, placenta, lung and kidney.

The protein resides in the nucleus. Its function is as follows. Involved in the functional recruitment of the Sin3-histone deacetylase complex (HDAC) to a specific subset of N-CoR corepressor complexes. Capable of transcription repression by N-CoR. Active in deacetylating core histone octamers (when in a complex) but inactive in deacetylating nucleosomal histones. In terms of biological role, (Microbial infection) Involved in transcriptional repression of HHV-1 genes TK and gC. The sequence is that of Histone deacetylase complex subunit SAP30 from Homo sapiens (Human).